We begin with the raw amino-acid sequence, 404 residues long: MMKSIILIVLDGLGDRPGSDLQNRTPLQAAFRPNLNWLASHGINGIMHPISPGIRCGSDTSHMSLLGYDPKVYYPGRGPFEALGLGMDIRPGDLAFRANFATNRDGVIVDRRAGRENKGNEELADAISLDMGEYSFRVKSGVEHRAALVVSGPDLSDMIGDSDPHREGLPPEKIRPTDPSGDRTAEVMNAYLEEARRILSDHRVNKERVKNGRLPGNELLVRSAGKVPAIPSFTEKNRMKGACVVGSPWLKGLCRLLRMDVFDVPGATGTVGSNYRGKIEKAVDLTSSHDFVLVNIKATDVAGHDGNYPLKRDVIEDIDRAMEPLKSIGDHAVICVTGDHSTPCSFKDHSGDPVPIVFYTDGVMNDGVHLFDELSSASGSLRITSYNVMDILMQLAGRSDKFGS.

A disordered region spans residues 155 to 183; the sequence is LSDMIGDSDPHREGLPPEKIRPTDPSGDR. Residues 162 to 183 show a composition bias toward basic and acidic residues; it reads SDPHREGLPPEKIRPTDPSGDR.

It belongs to the BPG-independent phosphoglycerate mutase family. A-PGAM subfamily.

It carries out the reaction (2R)-2-phosphoglycerate = (2R)-3-phosphoglycerate. Its pathway is carbohydrate degradation; glycolysis; pyruvate from D-glyceraldehyde 3-phosphate: step 3/5. In terms of biological role, catalyzes the interconversion of 2-phosphoglycerate and 3-phosphoglycerate. In Thermoplasma acidophilum (strain ATCC 25905 / DSM 1728 / JCM 9062 / NBRC 15155 / AMRC-C165), this protein is 2,3-bisphosphoglycerate-independent phosphoglycerate mutase.